Consider the following 172-residue polypeptide: uncharacterized protein (172 aa).

Transmembrane regions (helical) follow at residues 44-68, 86-110, and 117-135; these read VLVSSVLGALKVILIPCASTYAALT, LASYAMAWLLNILTIAVIIGLVFSL, and VVFISLGLLMSVTTSVTLF.

It belongs to the chlamydial CPn_0442/CT_006/TC_0274 family.

It is found in the cell membrane. This is an uncharacterized protein from Chlamydia pneumoniae (Chlamydophila pneumoniae).